A 366-amino-acid chain; its full sequence is Spermidine/putrescine import ATP-binding protein PotA (366 aa).

The region spanning 8 to 239 is the ABC transporter domain; sequence IRFENVTKQF…PINKFVADFI (232 aa). 41–48 is a binding site for ATP; the sequence is GPSGCGKT.

The protein belongs to the ABC transporter superfamily. Spermidine/putrescine importer (TC 3.A.1.11.1) family. In terms of assembly, the complex is composed of two ATP-binding proteins (PotA), two transmembrane proteins (PotB and PotC) and a solute-binding protein (PotD).

The protein localises to the cell membrane. It catalyses the reaction ATP + H2O + polyamine-[polyamine-binding protein]Side 1 = ADP + phosphate + polyamineSide 2 + [polyamine-binding protein]Side 1.. In terms of biological role, part of the ABC transporter complex PotABCD involved in spermidine/putrescine import. Responsible for energy coupling to the transport system. This Listeria innocua serovar 6a (strain ATCC BAA-680 / CLIP 11262) protein is Spermidine/putrescine import ATP-binding protein PotA.